The chain runs to 751 residues: Valine--tRNA ligase (751 aa).

Lys520 provides a ligand contact to ATP.

The protein belongs to the class-I aminoacyl-tRNA synthetase family. ValS type 2 subfamily.

It is found in the cytoplasm. The enzyme catalyses tRNA(Val) + L-valine + ATP = L-valyl-tRNA(Val) + AMP + diphosphate. Functionally, catalyzes the attachment of valine to tRNA(Val). As ValRS can inadvertently accommodate and process structurally similar amino acids such as threonine, to avoid such errors, it has a 'posttransfer' editing activity that hydrolyzes mischarged Thr-tRNA(Val) in a tRNA-dependent manner. The chain is Valine--tRNA ligase (valS) from Nanoarchaeum equitans (strain Kin4-M).